The primary structure comprises 330 residues: D-lactate dehydrogenase (330 aa).

Residues 156-157 (RI), Asp-176, 206-207 (VP), 233-235 (AAR), and Asp-259 contribute to the NAD(+) site. Residue Arg-235 is part of the active site. Glu-264 is an active-site residue. The Proton donor role is filled by His-296.

Belongs to the D-isomer specific 2-hydroxyacid dehydrogenase family.

The enzyme catalyses (R)-lactate + NAD(+) = pyruvate + NADH + H(+). The polypeptide is D-lactate dehydrogenase (ldhD) (Staphylococcus aureus (strain Mu50 / ATCC 700699)).